The chain runs to 411 residues: Na(+)-translocating NADH-quinone reductase subunit F (411 aa).

A helical transmembrane segment spans residues 5-25 (VILALGIAAFTVIVLVLVAII). The 2Fe-2S ferredoxin-type domain occupies 36–130 (GDITIGINDD…NMEVELPEEI (95 aa)). Cysteine 73, cysteine 79, cysteine 82, and cysteine 114 together coordinate [2Fe-2S] cluster. In terms of domain architecture, FAD-binding FR-type spans 133–273 (VKKWECTVIS…SGPFGEFFAK (141 aa)).

This sequence belongs to the NqrF family. As to quaternary structure, composed of six subunits; NqrA, NqrB, NqrC, NqrD, NqrE and NqrF. [2Fe-2S] cluster is required as a cofactor. It depends on FAD as a cofactor.

Its subcellular location is the cell inner membrane. The enzyme catalyses a ubiquinone + n Na(+)(in) + NADH + H(+) = a ubiquinol + n Na(+)(out) + NAD(+). Its function is as follows. NQR complex catalyzes the reduction of ubiquinone-1 to ubiquinol by two successive reactions, coupled with the transport of Na(+) ions from the cytoplasm to the periplasm. The first step is catalyzed by NqrF, which accepts electrons from NADH and reduces ubiquinone-1 to ubisemiquinone by a one-electron transfer pathway. The polypeptide is Na(+)-translocating NADH-quinone reductase subunit F (Haemophilus influenzae (strain PittEE)).